The chain runs to 210 residues: Large ribosomal subunit protein mL57 (210 aa).

Residues 1–59 (MLTRHCNRLGLQIENKFVFRSSSWNCVRRIGKIACNENKYRYEMTSTEEDIDSFFSRVF) constitute a mitochondrion transit peptide.

The protein belongs to the ribonuclease III family. Mitochondrion-specific ribosomal protein mL57 subfamily. In terms of assembly, component of the mitochondrial large ribosomal subunit (mt-LSU). Mature yeast 74S mitochondrial ribosomes consist of a small (37S) and a large (54S) subunit. The 37S small subunit contains a 15S ribosomal RNA (15S mt-rRNA) and at least 32 different proteins. The 54S large subunit contains a 21S rRNA (21S mt-rRNA) and at least 45 different proteins. mL57 forms a heterodimer with mL44 and stabilizes rRNA expansion segments 1/2 at a membrane-facing protuberance close to the point of attachment of the ribosome to the translocon in the membrane.

The protein localises to the mitochondrion. Functionally, component of the mitochondrial ribosome (mitoribosome), a dedicated translation machinery responsible for the synthesis of mitochondrial genome-encoded proteins, including at least some of the essential transmembrane subunits of the mitochondrial respiratory chain. The mitoribosomes are attached to the mitochondrial inner membrane and translation products are cotranslationally integrated into the membrane. In Schizosaccharomyces pombe (strain 972 / ATCC 24843) (Fission yeast), this protein is Large ribosomal subunit protein mL57 (mrp15).